Here is a 515-residue protein sequence, read N- to C-terminus: 4-hydroxybenzoate brominase (decarboxylating) (515 aa).

The FAD site is built by S13, E32, V40, F41, H51, V102, and Q364.

This sequence belongs to the FMO family. Requires FAD as cofactor.

It catalyses the reaction 2 bromide + 4-hydroxybenzoate + 2 NADPH + 2 O2 + 5 H(+) = 2,4-dibromophenol + CO2 + 2 NADP(+) + 4 H2O. It carries out the reaction bromide + 4-hydroxybenzoate + NADPH + O2 + 2 H(+) = 3-bromo-4-hydroxybenzoate + NADP(+) + 2 H2O. The enzyme catalyses 3-bromo-4-hydroxybenzoate + bromide + NADPH + O2 + 3 H(+) = 2,4-dibromophenol + CO2 + NADP(+) + 2 H2O. The catalysed reaction is 3,4-dihydroxybenzoate + 2 bromide + 2 NADPH + 2 O2 + 5 H(+) = 3,5-dibromobenzene-1,2-diol + CO2 + 2 NADP(+) + 4 H2O. It catalyses the reaction 3,4-dihydroxybenzoate + bromide + NADPH + O2 + 2 H(+) = 3-bromo-4,5-dihydroxybenzoate + NADP(+) + 2 H2O. It carries out the reaction 3-bromo-4,5-dihydroxybenzoate + bromide + NADPH + O2 + 3 H(+) = 3,5-dibromobenzene-1,2-diol + CO2 + NADP(+) + 2 H2O. With respect to regulation, activity is abolished in the absence of either bromide or NADPH, while a partial reduction in activity is observed upon omission of FAD. Activity does not require the addition of a flavin reductase to regenerate FADH(2) in situ. Functionally, brominase involved in the biosynthesis of polybrominated aromatic organic compounds. Catalyzes the bromination of 4-hydroxybenzoate (4-HBA) to 3-bromo-4-hydroxybenzoate, followed by bromination and decarboxylation of 3-bromo-4-hydroxybenzoate to 2,4-dibromophenol. Can also use 3,4-dihydroxybenzoate, with lower efficiency, forming 3-bromo-4,5-dihydroxybenzoate and 3,5-dibromobenzene-1,2-diol. Can utilize iodide in vivo leading to the formation of iodophenols, but cannot use chloride. The polypeptide is 4-hydroxybenzoate brominase (decarboxylating) (Pseudoalteromonas luteoviolacea (strain 2ta16)).